The following is a 110-amino-acid chain: Large ribosomal subunit protein eL34 (110 aa).

Positions 1-41 are disordered; that stretch reads MKNVLIHKGATYKTRSNRRRKVRTPSGKLVNRRVKKHSKKH. Basic residues predominate over residues 30–41; that stretch reads VNRRVKKHSKKH.

This sequence belongs to the eukaryotic ribosomal protein eL34 family.

This is Large ribosomal subunit protein eL34 (RPL34) from Encephalitozoon cuniculi (strain GB-M1) (Microsporidian parasite).